We begin with the raw amino-acid sequence, 984 residues long: Probable beta-galactosidase C (984 aa).

An N-terminal signal peptide occupies residues 1–19; sequence MRLLNIFTTLCLLLWSGAA. 5 residues coordinate substrate: tyrosine 78, asparagine 123, alanine 124, glutamate 125, and asparagine 183. Glutamate 184 serves as the catalytic Proton donor. Residue tyrosine 247 coordinates substrate. Cysteine 253 and cysteine 300 are oxidised to a cystine. Asparagine 272 is a glycosylation site (N-linked (GlcNAc...) asparagine). Glutamate 283 serves as the catalytic Nucleophile. Tyrosine 349 lines the substrate pocket. N-linked (GlcNAc...) asparagine glycosylation is found at asparagine 387, asparagine 433, asparagine 462, asparagine 516, asparagine 583, asparagine 599, asparagine 673, asparagine 716, asparagine 756, asparagine 860, and asparagine 870.

It belongs to the glycosyl hydrolase 35 family.

It localises to the secreted. The catalysed reaction is Hydrolysis of terminal non-reducing beta-D-galactose residues in beta-D-galactosides.. Its function is as follows. Cleaves beta-linked terminal galactosyl residues from gangliosides, glycoproteins, and glycosaminoglycans. The sequence is that of Probable beta-galactosidase C (lacC) from Sclerotinia sclerotiorum (strain ATCC 18683 / 1980 / Ss-1) (White mold).